A 394-amino-acid polypeptide reads, in one-letter code: Putative FNIP repeat-containing protein R636 (394 aa).

FNIP repeat units lie at residues 126–167 (FNKS…FSVY), 168–207 (FDQP…LYFG), and 210–250 (FNQP…IFEA).

The protein is Putative FNIP repeat-containing protein R636 of Acanthamoeba polyphaga mimivirus (APMV).